The sequence spans 516 residues: Cysteine--tRNA ligase (516 aa).

Position 32 (Cys-32) interacts with Zn(2+). The 'HIGH' region signature appears at 34-44; the sequence is PTVYMYAHIGN. The Zn(2+) site is built by Cys-230, His-255, and Glu-259. Residues 287–291 carry the 'KMSKS' region motif; that stretch reads KMSKS. Lys-290 lines the ATP pocket.

The protein belongs to the class-I aminoacyl-tRNA synthetase family. In terms of assembly, monomer. Zn(2+) is required as a cofactor.

The protein localises to the cytoplasm. It carries out the reaction tRNA(Cys) + L-cysteine + ATP = L-cysteinyl-tRNA(Cys) + AMP + diphosphate. The polypeptide is Cysteine--tRNA ligase (Salinibacter ruber (strain DSM 13855 / M31)).